The sequence spans 515 residues: Mucin-like protein Glc1.8a (515 aa).

The signal sequence occupies residues methionine 1–serine 20. The Extracellular segment spans residues histidine 21–proline 467. N-linked (GlcNAc...) asparagine; by host glycosylation is found at asparagine 24, asparagine 45, asparagine 51, asparagine 60, asparagine 85, asparagine 93, asparagine 102, asparagine 123, asparagine 129, asparagine 138, asparagine 180, asparagine 201, asparagine 207, asparagine 216, asparagine 258, asparagine 279, asparagine 285, asparagine 319, asparagine 327, asparagine 336, asparagine 357, asparagine 363, asparagine 372, asparagine 397, asparagine 405, asparagine 413, asparagine 434, and asparagine 441. Residues serine 80–leucine 114 form a disordered region. Over residues isoleucine 86–threonine 104 the composition is skewed to polar residues. Residues serine 314–threonine 358 are disordered. Residues valine 320 to threonine 338 are compositionally biased toward polar residues. Positions arginine 393–asparagine 413 are disordered. Residues tyrosine 468–phenylalanine 488 form a helical membrane-spanning segment. At arginine 489–glutamate 515 the chain is on the cytoplasmic side.

The protein belongs to the polydnaviridae Glc1.8 protein family.

It localises to the host membrane. Its function is as follows. Involved in suppression of the insect cellular immune response. Inhibits host hemocyte adhesion and phagocytosis. The polypeptide is Mucin-like protein Glc1.8a (O9) (Microplitis demolitor (Parasitoid wasp)).